Consider the following 397-residue polypeptide: Growth-regulating factor 5 (397 aa).

One can recognise a QLQ domain in the interval 16–51 (PFTPTQWEELEHQALIYKYMVSGVPVPPELIFSIRR). 2 consecutive short sequence motifs (bipartite nuclear localization signal) follow at residues 78–96 (RKPD…KKWR) and 114–121 (RGRNRARK). Positions 81–125 (DPEPGRCRRTDGKKWRCSREAYPDSKYCEKHMHRGRNRARKSLDQ) constitute a WRC domain. 4 disordered regions span residues 108-172 (CEKH…SMDA), 197-217 (LDYP…HHAS), 288-320 (PYHH…DHDH), and 340-397 (VLAN…DTGS). Positions 111 to 120 (HMHRGRNRAR) are enriched in basic residues. The span at 128 to 172 (TTTTPLTSPSLSFTNNNNPSPTLSSSSSSNSSSTTYSASSSSMDA) shows a compositional bias: low complexity. Residues 288–298 (PYHHCSTDHNK) show a composition bias toward basic and acidic residues.

This sequence belongs to the GRF family. In terms of assembly, interacts with GIF1. Strongly expressed in actively growing and developing tissues, such as roots, upper stems, and shoot tips containing the shoot apical meristem (SAM) and flower buds. Also expressed in mature flowers, but weakly expressed in mature stems and leaves.

It localises to the nucleus. Its function is as follows. Transcription activator that plays a role in the regulation of cell expansion in leaf and cotyledons tissues. Acts together with GIF1 for the development of appropriate leaf size and shape through the promotion and/or maintenance of cell proliferation activity in leaf primordia. This chain is Growth-regulating factor 5 (GRF5), found in Arabidopsis thaliana (Mouse-ear cress).